A 387-amino-acid polypeptide reads, in one-letter code: WD repeat-containing protein 89 (387 aa).

6 WD repeats span residues 21 to 65 (KEPT…VLRE), 68 to 107 (GYPGLLNGVRFANSCDSVYSACTDGTVKCWDARVAREKPV), 112 to 156 (GYPS…QDLS), 168 to 208 (THSD…EEDA), 214 to 254 (NSIS…TDEP), and 319 to 358 (GHAATVRSFCWNVQDDSLLTGGEDAQLLLWKPGAIEKTFT).

The chain is WD repeat-containing protein 89 (WDR89) from Pongo abelii (Sumatran orangutan).